A 246-amino-acid chain; its full sequence is MLWRQLIYWQLLALFFLPFCLCQDEYMESPQTGGLPPDCSKCCHGDYSFRGYQGPPGPPGPPGIPGNHGNNGNNGATGHEGAKGEKGDKGDLGPRGERGQHGPKGEKGYPGIPPELQIAFMASLATHFSNQNSGIIFSSVETNIGNFFDVMTGRFGAPVSGVYFFTFSMMKHEDVEEVYVYLMHNGNTVFSMYSYEMKGKSDTSSNHAVLKLAKGDEVWLRMGNGALHGDHQRFSTFAGFLLFETK.

The signal sequence occupies residues 1 to 22 (MLWRQLIYWQLLALFFLPFCLC). One can recognise a Collagen-like domain in the interval 51–113 (GYQGPPGPPG…KGEKGYPGIP (63 aa)). Residues 53–110 (QGPPGPPGPPGIPGNHGNNGNNGATGHEGAKGEKGDKGDLGPRGERGQHGPKGEKGYP) are disordered. The segment covering 55–64 (PPGPPGPPGI) has biased composition (pro residues). The span at 65-74 (PGNHGNNGNN) shows a compositional bias: low complexity. Residue asparagine 70 is glycosylated (N-linked (GlcNAc...) asparagine). A compositionally biased stretch (basic and acidic residues) spans 80 to 107 (EGAKGEKGDKGDLGPRGERGQHGPKGEK). Residues 113-246 (PPELQIAFMA…FAGFLLFETK (134 aa)) enclose the C1q domain.

In terms of processing, glycosylated on Asn-70. As to expression, expressed in colon and small intestine.

It is found in the secreted. This is Complement C1q tumor necrosis factor-related protein 3 (C1QTNF3) from Homo sapiens (Human).